The primary structure comprises 474 residues: Glutamate--tRNA ligase (474 aa).

The 'HIGH' region motif lies at 11 to 21 (PSPTGFLHIGG). The 'KMSKS' region signature appears at 240–244 (KLSKR). Lys-243 lines the ATP pocket.

The protein belongs to the class-I aminoacyl-tRNA synthetase family. Glutamate--tRNA ligase type 1 subfamily. Monomer.

The protein localises to the cytoplasm. It catalyses the reaction tRNA(Glu) + L-glutamate + ATP = L-glutamyl-tRNA(Glu) + AMP + diphosphate. Functionally, catalyzes the attachment of glutamate to tRNA(Glu) in a two-step reaction: glutamate is first activated by ATP to form Glu-AMP and then transferred to the acceptor end of tRNA(Glu). The polypeptide is Glutamate--tRNA ligase (Nitrobacter winogradskyi (strain ATCC 25391 / DSM 10237 / CIP 104748 / NCIMB 11846 / Nb-255)).